The sequence spans 418 residues: Serine--tRNA ligase (418 aa).

231–233 (TAE) is an L-serine binding site. 262–264 (RSE) lines the ATP pocket. Glu-285 lines the L-serine pocket. An ATP-binding site is contributed by 349–352 (EISS). L-serine is bound at residue Ser-385.

Belongs to the class-II aminoacyl-tRNA synthetase family. Type-1 seryl-tRNA synthetase subfamily. Homodimer. The tRNA molecule binds across the dimer.

It is found in the cytoplasm. The catalysed reaction is tRNA(Ser) + L-serine + ATP = L-seryl-tRNA(Ser) + AMP + diphosphate + H(+). It carries out the reaction tRNA(Sec) + L-serine + ATP = L-seryl-tRNA(Sec) + AMP + diphosphate + H(+). It functions in the pathway aminoacyl-tRNA biosynthesis; selenocysteinyl-tRNA(Sec) biosynthesis; L-seryl-tRNA(Sec) from L-serine and tRNA(Sec): step 1/1. Functionally, catalyzes the attachment of serine to tRNA(Ser). Is also able to aminoacylate tRNA(Sec) with serine, to form the misacylated tRNA L-seryl-tRNA(Sec), which will be further converted into selenocysteinyl-tRNA(Sec). In Ureaplasma parvum serovar 3 (strain ATCC 27815 / 27 / NCTC 11736), this protein is Serine--tRNA ligase.